A 349-amino-acid chain; its full sequence is uncharacterized protein (349 aa).

The next 10 membrane-spanning stretches (helical) occupy residues 15–35 (VHSP…NPVT), 53–73 (ISFC…MILI), 91–111 (WFLL…LMFS), 120–140 (NVVL…ILLL), 147–167 (LSMV…FWGV), 179–199 (FGLG…TTIL), 218–238 (LLGT…DHFM), 248–268 (WMLI…LAGL), 276–296 (INLA…LILL), and 302–322 (AQYL…IDNL). EamA domains are found at residues 39-164 (IELG…VTVF) and 191-319 (FISA…LSFI).

It belongs to the EamA transporter family.

The protein localises to the cell membrane. This is an uncharacterized protein from Synechocystis sp. (strain ATCC 27184 / PCC 6803 / Kazusa).